The sequence spans 327 residues: Ribosomal RNA small subunit methyltransferase H (327 aa).

S-adenosyl-L-methionine-binding positions include 36–38, aspartate 55, leucine 89, aspartate 103, and glutamine 110; that span reads GGH. The disordered stretch occupies residues 286–327; that stretch reads GAEPASDTEIEQNARAGSVRLRAAERTAAEPGRAHNPTGGVR.

It belongs to the methyltransferase superfamily. RsmH family.

Its subcellular location is the cytoplasm. It carries out the reaction cytidine(1402) in 16S rRNA + S-adenosyl-L-methionine = N(4)-methylcytidine(1402) in 16S rRNA + S-adenosyl-L-homocysteine + H(+). In terms of biological role, specifically methylates the N4 position of cytidine in position 1402 (C1402) of 16S rRNA. This chain is Ribosomal RNA small subunit methyltransferase H, found in Parafrankia sp. (strain EAN1pec).